The following is a 2371-amino-acid chain: NBAS subunit of NRZ tethering complex (2371 aa).

Positions 1-1035 (MAAPESGPAL…KTEATTKLHD (1035 aa)) are interaction with USE1. WD repeat units lie at residues 130–169 (DPKPQWRRVAWSYDCTLLAYAESTGTVRVFDLMGSELFVI) and 316–355 (QEQDGIFKMSLSPDGMLLAAIHFSGKLSIWAIPSLKQQGE). A phosphoserine mark is found at Ser473 and Ser475. The interval 1036-2371 (MVDQLEQILS…TALRAAQHWV (1336 aa)) is interaction with ZW10 and RINT1. Lys1057 is subject to N6-acetyllysine.

As to quaternary structure, component of the NRZ complex composed of NBAS, ZW10 and RINT1/TIP20L; NRZ associates with SNAREs STX18, USE1, BNIP1/SEC20L and SEC22B (the assembly has been described as syntaxin 18 complex); links NRZ to SNARE USE1. Broadly expressed, with highest levels in heart and skeletal muscle, and lowest levels in liver, small intestine and thymus. Well expressed in retinal ganglion cells, epidermal skin cells, and leukocytes. Up-regulated together with N-myc in some neuroblastoma cell lines.

It is found in the cytoplasm. The protein localises to the endoplasmic reticulum. The protein resides in the endoplasmic reticulum membrane. Its function is as follows. Involved in Golgi-to-endoplasmic reticulum (ER) retrograde transport; the function is proposed to depend on its association in the NRZ complex which is believed to play a role in SNARE assembly at the ER. Required for normal embryonic development. May play a role in the nonsense-mediated decay pathway of mRNAs containing premature stop codons. This is NBAS subunit of NRZ tethering complex from Homo sapiens (Human).